Here is a 585-residue protein sequence, read N- to C-terminus: Pyruvate kinase (585 aa).

Arginine 32 is a substrate binding site. Asparagine 34, serine 36, aspartate 66, and threonine 67 together coordinate K(+). 34–37 (NFSH) contributes to the ATP binding site. Positions 73 and 156 each coordinate ATP. Glutamate 221 is a Mg(2+) binding site. Residues glycine 244, aspartate 245, and threonine 277 each coordinate substrate. Aspartate 245 is a binding site for Mg(2+).

Belongs to the pyruvate kinase family. The protein in the C-terminal section; belongs to the PEP-utilizing enzyme family. The cofactor is Mg(2+). Requires K(+) as cofactor.

The enzyme catalyses pyruvate + ATP = phosphoenolpyruvate + ADP + H(+). Its pathway is carbohydrate degradation; glycolysis; pyruvate from D-glyceraldehyde 3-phosphate: step 5/5. The protein is Pyruvate kinase (pyk) of Staphylococcus aureus (strain USA300).